The sequence spans 479 residues: Sulfate adenylyltransferase subunit 1 (479 aa).

One can recognise a tr-type G domain in the interval 25–239 (KSLLRFLTCG…EVLETVDIQR (215 aa)). Residues 34–41 (GSVDDGKS) form a G1 region. 34–41 (GSVDDGKS) lines the GTP pocket. Residues 92–96 (GITID) form a G2 region. A G3 region spans residues 113-116 (DTPG). GTP-binding positions include 113–117 (DTPGH) and 168–171 (NKMD). The interval 168–171 (NKMD) is G4. Residues 206-208 (SAL) form a G5 region.

Belongs to the TRAFAC class translation factor GTPase superfamily. Classic translation factor GTPase family. CysN/NodQ subfamily. In terms of assembly, heterodimer composed of CysD, the smaller subunit, and CysN.

It carries out the reaction sulfate + ATP + H(+) = adenosine 5'-phosphosulfate + diphosphate. It participates in sulfur metabolism; hydrogen sulfide biosynthesis; sulfite from sulfate: step 1/3. In terms of biological role, with CysD forms the ATP sulfurylase (ATPS) that catalyzes the adenylation of sulfate producing adenosine 5'-phosphosulfate (APS) and diphosphate, the first enzymatic step in sulfur assimilation pathway. APS synthesis involves the formation of a high-energy phosphoric-sulfuric acid anhydride bond driven by GTP hydrolysis by CysN coupled to ATP hydrolysis by CysD. The protein is Sulfate adenylyltransferase subunit 1 of Salmonella arizonae (strain ATCC BAA-731 / CDC346-86 / RSK2980).